We begin with the raw amino-acid sequence, 486 residues long: Malonate-semialdehyde dehydrogenase 1 (486 aa).

NAD(+) contacts are provided by Phe-154, Lys-178, Glu-181, Arg-182, and Ser-231. Cys-286 functions as the Nucleophile in the catalytic mechanism. Glu-386 contacts NAD(+).

Belongs to the aldehyde dehydrogenase family. IolA subfamily. Homotetramer.

It catalyses the reaction 3-oxopropanoate + NAD(+) + CoA + H2O = hydrogencarbonate + acetyl-CoA + NADH + H(+). The catalysed reaction is 2-methyl-3-oxopropanoate + NAD(+) + CoA + H2O = propanoyl-CoA + hydrogencarbonate + NADH + H(+). Its pathway is polyol metabolism; myo-inositol degradation into acetyl-CoA; acetyl-CoA from myo-inositol: step 7/7. Catalyzes the oxidation of malonate semialdehyde (MSA) and methylmalonate semialdehyde (MMSA) into acetyl-CoA and propanoyl-CoA, respectively. Is involved in a myo-inositol catabolic pathway. Bicarbonate, and not CO2, is the end-product of the enzymatic reaction. The polypeptide is Malonate-semialdehyde dehydrogenase 1 (Bacillus thuringiensis (strain Al Hakam)).